The chain runs to 965 residues: MSSSAADPFAARLNSDVRQRHPTASATSKNVEGTSQQKQQQQQQQSEANAAASRVKKTYGKTPDGTVFVVPTTHDMVTQLLDPREPKNLSDVAVLAIIALHFLAAYYLPWGVKRPLFAAIFMFWRLAYNVGIGYLLTIQSKYKLLVTWAKRWKLFENPATGKNPRPWLYNLLKKELETKIPQDYKFEEAPIEYNTWLTFRRVVDLILMCDFISYCLFAIVCAHKPDGEGLFMCFARWAAGITLVGFNLWVKLDAHRVVKDYAWYWGDFFYLIEQELTFDGVFELAPHPMYSIGYAGYYGISMMAASYDVLFISIIAHAAQFAFLVIVENPHIEKTYNPPQPRVRCESEAGSQLQEFASEYSVPSTTGRHDNTPLPVHNLIGLKNLDFFRITDVAIVLLCAYLAVVTMVTPNTRFYQALFVLHALAWRLWYSAGLGVILTMQSEEKMFTRHFLKYGESVGEAWRQWKGIYHLSNCLCHASFIAASYKMYEFPADWTYGWALLKHVVGLSLIALQVWTATSIYESLGEFGWFYGDFFFDSKRQLTYTSIYRFLNNPERVFGTAGLWGAALITWSRAIFLMALAGHFLTLAFLAYVEKPHMQKVYGRNLRDDAGVTKFIKRSLPPPVTEWQQSIDKVLDETKHFIDEFVDAARSRLATGSSTIVKDTSALFNKYPARLTLSKISPDLAGYDPKHYGLSLAGTRVVGTNEKATGKESPNARVLKDVKTQAFEYGAPIRVKWTAPANHSKKDWVGLYMVTDNRSREVTEVPSLGRWVPTNPGEYDTTTDQGILVWDQPVEKKSEDTDLVEGEMVFEGDKLWWTQGVFEFRYHHGGGHHVMSISEPFEIQIPKFDDEHMGVDISGEVGERAVEAALLPVIRNCLDRDPDIAPSNAEERFGGHVERDGKYARRVVYAIRHMFGIDFAPAVVLADGNVRRLAWRICHAKEVLAPFSMSHTNGRTTPVDSKFSE.

The segment at 1-55 (MSSSAADPFAARLNSDVRQRHPTASATSKNVEGTSQQKQQQQQQQSEANAAASRV) is disordered. Residues 1–91 (MSSSAADPFA…DPREPKNLSD (91 aa)) are Lumenal-facing. Over residues 22–35 (PTASATSKNVEGTS) the composition is skewed to polar residues. Residues 36–45 (QQKQQQQQQQ) show a composition bias toward low complexity. Residues 92-112 (VAVLAIIALHFLAAYYLPWGV) traverse the membrane as a helical segment. The Cytoplasmic segment spans residues 113 to 115 (KRP). Residues 116–136 (LFAAIFMFWRLAYNVGIGYLL) form a helical membrane-spanning segment. Over 137–201 (TIQSKYKLLV…EYNTWLTFRR (65 aa)) the chain is Lumenal. A helical transmembrane segment spans residues 202–222 (VVDLILMCDFISYCLFAIVCA). At 223–229 (HKPDGEG) the chain is on the cytoplasmic side. Residues 230–250 (LFMCFARWAAGITLVGFNLWV) form a helical membrane-spanning segment. The Lumenal portion of the chain corresponds to 251 to 279 (KLDAHRVVKDYAWYWGDFFYLIEQELTFD). The chain crosses the membrane as a helical span at residues 280 to 300 (GVFELAPHPMYSIGYAGYYGI). At 301 to 306 (SMMAAS) the chain is on the cytoplasmic side. A helical membrane pass occupies residues 307 to 327 (YDVLFISIIAHAAQFAFLVIV). Residues 328–389 (ENPHIEKTYN…IGLKNLDFFR (62 aa)) are Lumenal-facing. A helical membrane pass occupies residues 390-410 (ITDVAIVLLCAYLAVVTMVTP). Residues 411-417 (NTRFYQA) lie on the Cytoplasmic side of the membrane. The chain crosses the membrane as a helical span at residues 418 to 438 (LFVLHALAWRLWYSAGLGVIL). The Lumenal portion of the chain corresponds to 439-467 (TMQSEEKMFTRHFLKYGESVGEAWRQWKG). A helical membrane pass occupies residues 468 to 488 (IYHLSNCLCHASFIAASYKMY). The Cytoplasmic segment spans residues 489-496 (EFPADWTY). A helical membrane pass occupies residues 497-517 (GWALLKHVVGLSLIALQVWTA). At 518–573 (TSIYESLGEFGWFYGDFFFDSKRQLTYTSIYRFLNNPERVFGTAGLWGAALITWSR) the chain is on the lumenal side. Residues 574-594 (AIFLMALAGHFLTLAFLAYVE) traverse the membrane as a helical segment. Topologically, residues 595–965 (KPHMQKVYGR…TTPVDSKFSE (371 aa)) are cytoplasmic.

The protein belongs to the class VI-like SAM-binding methyltransferase superfamily. CHO2 family.

It is found in the endoplasmic reticulum membrane. The catalysed reaction is a 1,2-diacyl-sn-glycero-3-phosphoethanolamine + S-adenosyl-L-methionine = a 1,2-diacyl-sn-glycero-3-phospho-N-methylethanolamine + S-adenosyl-L-homocysteine + H(+). Its pathway is phospholipid metabolism; phosphatidylcholine biosynthesis. Its function is as follows. Catalyzes the first step of the methylation pathway of phosphatidylcholine biosynthesis, the SAM-dependent methylation of phosphatidylethanolamine (PE) to phosphatidylmonomethylethanolamine (PMME). The polypeptide is Phosphatidylethanolamine N-methyltransferase (Neurospora crassa (strain ATCC 24698 / 74-OR23-1A / CBS 708.71 / DSM 1257 / FGSC 987)).